We begin with the raw amino-acid sequence, 65 residues long: uncharacterized protein (65 aa).

The first 16 residues, 1-16, serve as a signal peptide directing secretion; it reads MMHVCSLLVSFDVVKS.

This is an uncharacterized protein from Saccharomyces cerevisiae (strain ATCC 204508 / S288c) (Baker's yeast).